The primary structure comprises 783 residues: Endonuclease MutS2 (783 aa).

Residue 333-340 (GPNTGGKT) coordinates ATP. The Smr domain occupies 708 to 783 (IDLRGKNIEE…GLGATFIYLK (76 aa)).

The protein belongs to the DNA mismatch repair MutS family. MutS2 subfamily. As to quaternary structure, homodimer. Binds to stalled ribosomes, contacting rRNA.

Endonuclease that is involved in the suppression of homologous recombination and thus may have a key role in the control of bacterial genetic diversity. In terms of biological role, acts as a ribosome collision sensor, splitting the ribosome into its 2 subunits. Detects stalled/collided 70S ribosomes which it binds and splits by an ATP-hydrolysis driven conformational change. Acts upstream of the ribosome quality control system (RQC), a ribosome-associated complex that mediates the extraction of incompletely synthesized nascent chains from stalled ribosomes and their subsequent degradation. Probably generates substrates for RQC. This chain is Endonuclease MutS2, found in Finegoldia magna (strain ATCC 29328 / DSM 20472 / WAL 2508) (Peptostreptococcus magnus).